Consider the following 180-residue polypeptide: NAD(P)H-quinone oxidoreductase subunit 6, chloroplastic (180 aa).

A run of 5 helical transmembrane segments spans residues 10 to 30, 32 to 52, 57 to 77, 102 to 122, and 153 to 173; these read LLLAPLTLSLIFGGIGVVLLT, IIYSALSLGLVLICISFFYII, FVAVAQILIYIGAVNILILFA, IVCTSLFCSLITIILNISWFG, and FLPFELISIILLVALIGAITI.

The protein belongs to the complex I subunit 6 family. In terms of assembly, NDH is composed of at least 16 different subunits, 5 of which are encoded in the nucleus.

It localises to the plastid. It is found in the chloroplast thylakoid membrane. It catalyses the reaction a plastoquinone + NADH + (n+1) H(+)(in) = a plastoquinol + NAD(+) + n H(+)(out). The catalysed reaction is a plastoquinone + NADPH + (n+1) H(+)(in) = a plastoquinol + NADP(+) + n H(+)(out). NDH shuttles electrons from NAD(P)H:plastoquinone, via FMN and iron-sulfur (Fe-S) centers, to quinones in the photosynthetic chain and possibly in a chloroplast respiratory chain. The immediate electron acceptor for the enzyme in this species is believed to be plastoquinone. Couples the redox reaction to proton translocation, and thus conserves the redox energy in a proton gradient. The chain is NAD(P)H-quinone oxidoreductase subunit 6, chloroplastic (ndhG) from Cryptomeria japonica (Japanese cedar).